Here is a 328-residue protein sequence, read N- to C-terminus: Homeobox protein Hox-C13 (328 aa).

The segment at 23–48 (AAESGSGGGGGGGGAGGAGGGCSGAS) is disordered. Residues 27–45 (GSGGGGGGGGAGGAGGGCS) show a composition bias toward gly residues. Residues 258–317 (GRKKRVPYTKVQLKELEKEYAASKFITKEKRRRISATTNLSERQVTIWFQNRRVKEKKVV) constitute a DNA-binding region (homeobox).

Belongs to the Abd-B homeobox family. As to expression, expressed in differentiating keratinocytes. In the hair follicle lower matrix, expressed in all 3 hair shaft-forming compartments, i.e. cuticle, cortex and medulla. Expression stops sharply at the boundary with the germinal matrix compartment.

It is found in the nucleus. In terms of biological role, transcription factor which plays a role in hair follicle differentiation. Regulates FOXQ1 expression and that of other hair-specific genes. This is Homeobox protein Hox-C13 (Hoxc13) from Mus musculus (Mouse).